Here is a 256-residue protein sequence, read N- to C-terminus: MYSTRFRRGLSYVPRRYNPRNYGFKRTFVVKRGDAKRRQTQVKKLTEDVKMSSQRIHENQYGPEFVMAHNTAISTFINYPQLCKTQPNRSRSYIKLKSLHFKGTLKIERVGSEVNMAGLNPKIEGVFTVVLVVDRKPHLNPTGNLLQFDELFGARIHSLGNLAVTPALKERFYILHVLKRVISVEKDSMMLDLEGSTCLSSRRYNCWSTFKDLDPSSCNGVYDNISKNAILVYYCWMSDAMSKASTFVSFDLDYFG.

The short motif at 21-42 (NYGFKRTFVVKRGDAKRRQTQV) is the Bipartite nuclear localization signal element. The Nuclear localization signal signature appears at 81 to 96 (QLCKTQPNRSRSYIKL). The interaction with Arabidopsis thaliana NSI protein stretch occupies residues 150 to 187 (ELFGARIHSLGNLAVTPALKERFYILHVLKRVISVEKD).

The protein belongs to the begomovirus nuclear shuttle protein family. In terms of assembly, binds to single-stranded and double-stranded viral DNA. Interacts with the host nuclear shuttle interacting (NSI) protein. This interaction may allow NSP to recruit NSI monomers to the viral genome and thus regulate nuclear export of viral genome by NSP.

The protein resides in the host nucleus. Its subcellular location is the host cytoplasm. The protein localises to the host cell membrane. Functionally, binds to the genomic viral ssDNA, shuttles it into and out of the cell nucleus. Begomoviruses use 2 proteins to transport their DNA from cell to cell. The nuclear shuttle protein (NSP) shuttles it between nucleus and cytoplasm and the movement protein (MP) probably transports the DNA-NSP complex to the cell periphery and facilitates movement across the cell wall. The chain is Nuclear shuttle protein from Pepper huasteco yellow vein virus (PHYVV).